The sequence spans 114 residues: Nucleoid-associated protein PCC7424_2224 (114 aa).

Belongs to the YbaB/EbfC family. Homodimer.

It localises to the cytoplasm. The protein resides in the nucleoid. In terms of biological role, binds to DNA and alters its conformation. May be involved in regulation of gene expression, nucleoid organization and DNA protection. This is Nucleoid-associated protein PCC7424_2224 from Gloeothece citriformis (strain PCC 7424) (Cyanothece sp. (strain PCC 7424)).